A 94-amino-acid chain; its full sequence is Integration host factor subunit beta (94 aa).

It belongs to the bacterial histone-like protein family. In terms of assembly, heterodimer of an alpha and a beta chain.

Its function is as follows. This protein is one of the two subunits of integration host factor, a specific DNA-binding protein that functions in genetic recombination as well as in transcriptional and translational control. This is Integration host factor subunit beta from Azoarcus sp. (strain BH72).